Here is a 215-residue protein sequence, read N- to C-terminus: Ribonuclease T (215 aa).

Positions 20 to 194 (VVIDVETAGF…YDTERTAVLF (175 aa)) constitute an Exonuclease domain. The Mg(2+) site is built by Asp23, Glu25, His181, and Asp186. Residue His181 is the Proton donor/acceptor of the active site.

This sequence belongs to the RNase T family. As to quaternary structure, homodimer. The cofactor is Mg(2+).

Functionally, trims short 3' overhangs of a variety of RNA species, leaving a one or two nucleotide 3' overhang. Responsible for the end-turnover of tRNA: specifically removes the terminal AMP residue from uncharged tRNA (tRNA-C-C-A). Also appears to be involved in tRNA biosynthesis. The sequence is that of Ribonuclease T from Shigella dysenteriae serotype 1 (strain Sd197).